The sequence spans 250 residues: Beta-crystallin B1 (250 aa).

The tract at residues 1-47 (MSQVAKAAATTAVNPGPDGKGKGTPSTGTAPAPGPTPVPASVPRPAA) is disordered. Ser-2 carries the N-acetylserine modification. The N-terminal arm stretch occupies residues 2–56 (SQVAKAAATTAVNPGPDGKGKGTPSTGTAPAPGPTPVPASVPRPAAKVGELPPGS). The span at 32-42 (APGPTPVPASV) shows a compositional bias: pro residues. 2 Beta/gamma crystallin 'Greek key' domains span residues 57-96 (YRLV…IVLS) and 97-141 (GPWV…RPIR). The interval 142–146 (MDSQE) is connecting peptide. 2 Beta/gamma crystallin 'Greek key' domains span residues 147–188 (HKIC…TVSS) and 189–231 (GTWV…RRLR). A C-terminal arm region spans residues 233–250 (RQWHQEGCFPVLTAEPPK).

This sequence belongs to the beta/gamma-crystallin family. As to quaternary structure, homo/heterodimer, or complexes of higher-order. The structure of beta-crystallin oligomers seems to be stabilized through interactions between the N-terminal arms. Post-translationally, specific cleavages in the N-terminal arm occur during lens maturation and give rise to truncated forms, leading to impaired oligomerization and protein insolubilization. The protease responsible for this partial degradation could be calpain II.

Crystallins are the dominant structural components of the vertebrate eye lens. In Rattus norvegicus (Rat), this protein is Beta-crystallin B1 (Crybb1).